Consider the following 3312-residue polypeptide: Cadherin EGF LAG seven-pass G-type receptor 3 (3312 aa).

A signal peptide spans 1–32; that stretch reads MMARRPPWRGLGGRSTPILLLLLLSLFPLSQE. At 33–2540 the chain is on the extracellular side; that stretch reads ELGGGGHQGW…RLEGDLELLA (2508 aa). 3 disordered regions span residues 90 to 112, 143 to 199, and 212 to 306; these read GRRQ…LGIE, GRTG…RKRV, and GSKG…EARK. Residues 159 to 173 show a composition bias toward low complexity; it reads SSGVPGSGNSSPLPS. Residues 290–299 are compositionally biased toward pro residues; sequence RPGPRPPGLP. Cadherin domains follow at residues 326–433, 434–545, 546–651, 652–756, 757–858, 859–961, 962–1067, 1068–1169, and 1170–1265; these read PQYN…SPVF, EQAQ…APQF, SEKR…IPIF, VSTP…RPEF, TMKE…RPVF, QSAH…APQF, VASH…APVF, PAEE…SPVL, and NNFQ…RVVI. The N-linked (GlcNAc...) asparagine glycan is linked to Asn632. Residue Asn847 is glycosylated (N-linked (GlcNAc...) asparagine). Asn1182, Asn1222, Asn1317, and Asn1327 each carry an N-linked (GlcNAc...) asparagine glycan. In terms of domain architecture, EGF-like 1; calcium-binding spans 1375-1433; that stretch reads DDNVCLREPCENYMKCVSVLRFDSSAPFLASASTLFRPIQPIAGLRCRCPPGFTGDFCE. 9 disulfide bridges follow: Cys1379–Cys1390, Cys1384–Cys1421, Cys1423–Cys1432, Cys1439–Cys1450, Cys1444–Cys1459, Cys1461–Cys1470, Cys1479–Cys1490, Cys1484–Cys1500, and Cys1502–Cys1513. The region spanning 1435–1471 is the EGF-like 2; calcium-binding domain; it reads ELDLCYSNPCRNGGACARREGGYTCVCRPRFTGEDCE. Positions 1475–1514 constitute an EGF-like 3; calcium-binding domain; that stretch reads EAGRCVPGVCRNGGTCTDAPNGGFRCQCPAGGAFEGPRCE. Residues 1515 to 1719 form the Laminin G-like 1 domain; that stretch reads VAARSFPPSS…VANNGTMAGC (205 aa). Asn1649 and Asn1713 each carry an N-linked (GlcNAc...) asparagine glycan. Intrachain disulfides connect Cys1693-Cys1719, Cys1726-Cys1737, Cys1731-Cys1746, and Cys1748-Cys1757. The region spanning 1722–1758 is the EGF-like 4; calcium-binding domain; the sequence is KLHFCDSGPCKNSGFCSERWGSFSCDCPVGFGGKDCQ. The region spanning 1764–1944 is the Laminin G-like 2 domain; sequence PHHFRGNGTL…SHRVNAEPGC (181 aa). Residue Asn1770 is glycosylated (N-linked (GlcNAc...) asparagine). Cystine bridges form between Cys1915–Cys1944, Cys1950–Cys1961, Cys1955–Cys1970, Cys1972–Cys1981, Cys1985–Cys1996, Cys1990–Cys2008, Cys2010–Cys2019, Cys2027–Cys2040, and Cys2042–Cys2052. An EGF-like 5; calcium-binding domain is found at 1946 to 1982; it reads VTNACASGPCPPHADCRDLWQTFSCTCQPGYYGPGCV. Position 1963 is a (3R)-3-hydroxyaspartate (Asp1963). The region spanning 1983–2020 is the EGF-like 6; calcium-binding domain; sequence DACLLNPCQNQGSCRHLPGAPHGYTCDCVGGYFGHHCE. The region spanning 2021-2053 is the EGF-like 7; calcium-binding domain; it reads HRMDQQCPRGWWGSPTCGPCNCDVHKGFDPNCN. An N-linked (GlcNAc...) asparagine glycan is attached at Asn2053. Residues 2055 to 2090 form the EGF-like 8; calcium-binding domain; that stretch reads TNGQCHCKEFHYRPRGSDSCLPCDCYPVGSTSRSCA. Cystine bridges form between Cys2059/Cys2074, Cys2061/Cys2077, Cys2079/Cys2089, Cys2098/Cys2107, and Cys2110/Cys2122. The region spanning 2077–2124 is the Laminin EGF-like domain; that stretch reads CDCYPVGSTSRSCAPHSGQCPCRPGALGRQCNSCDSPFAEVTASGCRV. Residue Tyr2126 is modified to Phosphotyrosine. N-linked (GlcNAc...) asparagine glycans are attached at residues Asn2177, Asn2196, Asn2386, Asn2474, and Asn2506. Residues 2361–2399 are disordered; that stretch reads THVLLPSQSPRPSPSEVLPTSSSIENSTTSSVVPPPAPP. Positions 2368-2530 constitute a GAIN-B domain; that stretch reads QSPRPSPSEV…GVLMDASPRE (163 aa). Low complexity predominate over residues 2380–2391; it reads TSSSIENSTTSS. 2 disulfide bridges follow: Cys2480-Cys2512 and Cys2500-Cys2514. A GPS region spans residues 2480–2530; the sequence is CVQWDPPGLAEQHGVWTARDCELVHRNGSHARCRCSRTGTFGVLMDASPRE. A helical membrane pass occupies residues 2541-2561; sequence VFTHVVVAVSVAALVLTAAIL. The Cytoplasmic segment spans residues 2562–2572; the sequence is LSLRSLKSNVR. Residues 2573 to 2593 traverse the membrane as a helical segment; sequence GIHANVAAALGVAELLFLLGI. Over 2594–2601 the chain is Extracellular; the sequence is HRTHNQLV. Residues 2602-2622 form a helical membrane-spanning segment; the sequence is CTAVAILLHYFFLSTFAWLFV. At 2623 to 2643 the chain is on the cytoplasmic side; the sequence is QGLHLYRMQVEPRNVDRGAMR. The helical transmembrane segment at 2644 to 2664 threads the bilayer; that stretch reads FYHALGWGVPAVLLGLAVGLD. The Extracellular segment spans residues 2665-2681; it reads PEGYGNPDFCWISVHEP. Residues 2682–2702 form a helical membrane-spanning segment; that stretch reads LIWSFAGPVVLVIVMNGTMFL. Residues 2703 to 2725 are Cytoplasmic-facing; the sequence is LAARTSCSTGQREAKKTSALTLR. Residues 2726–2746 form a helical membrane-spanning segment; sequence SSFLLLLLVSASWLFGLLAVN. At 2747–2753 the chain is on the extracellular side; that stretch reads HSILAFH. A helical transmembrane segment spans residues 2754-2774; sequence YLHAGLCGLQGLAVLLLFCVL. The Cytoplasmic portion of the chain corresponds to 2775 to 3312; the sequence is NADARAAWMP…SEVPRSEGHS (538 aa). Disordered regions lie at residues 2888 to 2927 and 2978 to 3006; these read AGAD…QRPL and TSKD…AQRQ. Positions 2890 to 2900 are enriched in acidic residues; that stretch reads ADSDSDSDLSL. Tyr3051 is subject to Phosphotyrosine. Disordered regions lie at residues 3086–3243 and 3256–3312; these read EEAP…TEQL and SALS…EGHS. Position 3097 is a phosphoserine (Ser3097). 3 stretches are compositionally biased toward low complexity: residues 3175-3198, 3256-3265, and 3272-3281; these read SPQR…SRSS, SALSSVQSSS, and TTATPSATAS. Over residues 3287-3300 the composition is skewed to polar residues; it reads TPRSATSHSISELS.

Belongs to the G-protein coupled receptor 2 family. LN-TM7 subfamily.

Its subcellular location is the cell membrane. Receptor that may have an important role in cell/cell signaling during nervous system formation. In Homo sapiens (Human), this protein is Cadherin EGF LAG seven-pass G-type receptor 3 (CELSR3).